Consider the following 175-residue polypeptide: Shikimate kinase (175 aa).

Residue 12–19 coordinates ATP; the sequence is GGRASGKS.

This sequence belongs to the shikimate kinase family.

It localises to the cytoplasm. It catalyses the reaction shikimate + ATP = 3-phosphoshikimate + ADP + H(+). It participates in metabolic intermediate biosynthesis; chorismate biosynthesis; chorismate from D-erythrose 4-phosphate and phosphoenolpyruvate: step 5/7. The sequence is that of Shikimate kinase from Nitratidesulfovibrio vulgaris (strain ATCC 29579 / DSM 644 / CCUG 34227 / NCIMB 8303 / VKM B-1760 / Hildenborough) (Desulfovibrio vulgaris).